A 448-amino-acid chain; its full sequence is JmjC domain-containing protein D (448 aa).

The 144-residue stretch at 305–448 (EQIPQLRNDI…SLSQSFSIFP (144 aa)) folds into the JmjC domain.

The polypeptide is JmjC domain-containing protein D (jcdD) (Dictyostelium discoideum (Social amoeba)).